The following is a 465-amino-acid chain: Iron-sulfur cluster assembly SufBD family protein SAUSA300_0822 (465 aa).

The protein belongs to the iron-sulfur cluster assembly SufBD family.

The polypeptide is Iron-sulfur cluster assembly SufBD family protein SAUSA300_0822 (Staphylococcus aureus (strain USA300)).